A 179-amino-acid polypeptide reads, in one-letter code: Large ribosomal subunit protein uL5 (179 aa).

This sequence belongs to the universal ribosomal protein uL5 family. As to quaternary structure, part of the 50S ribosomal subunit; part of the 5S rRNA/L5/L18/L25 subcomplex. Contacts the 5S rRNA and the P site tRNA. Forms a bridge to the 30S subunit in the 70S ribosome.

Functionally, this is one of the proteins that bind and probably mediate the attachment of the 5S RNA into the large ribosomal subunit, where it forms part of the central protuberance. In the 70S ribosome it contacts protein S13 of the 30S subunit (bridge B1b), connecting the 2 subunits; this bridge is implicated in subunit movement. Contacts the P site tRNA; the 5S rRNA and some of its associated proteins might help stabilize positioning of ribosome-bound tRNAs. The chain is Large ribosomal subunit protein uL5 from Halorhodospira halophila (strain DSM 244 / SL1) (Ectothiorhodospira halophila (strain DSM 244 / SL1)).